We begin with the raw amino-acid sequence, 147 residues long: Large ribosomal subunit protein uL15 (147 aa).

A disordered region spans residues 1–58 (MRLHDLKPAEGSTKKKKRVGRGIGSGHGKTSGRGHKGQNARSGGGVRPGFEGGQMPLT). Residues 42-52 (SGGGVRPGFEG) show a composition bias toward gly residues.

Belongs to the universal ribosomal protein uL15 family. In terms of assembly, part of the 50S ribosomal subunit.

Its function is as follows. Binds to the 23S rRNA. This chain is Large ribosomal subunit protein uL15, found in Caldanaerobacter subterraneus subsp. tengcongensis (strain DSM 15242 / JCM 11007 / NBRC 100824 / MB4) (Thermoanaerobacter tengcongensis).